Reading from the N-terminus, the 305-residue chain is Oxidoreductase swnR (305 aa).

It belongs to the NmrA-type oxidoreductase family. Isoflavone reductase subfamily.

The catalysed reaction is L-pipecolate + O2 = L-1-piperideine-6-carboxylate + H2O2 + H(+). Its pathway is mycotoxin biosynthesis. Functionally, oxidoreductase; part of the gene cluster that mediates the biosynthesis of swainsonine (SW), a cytotoxic fungal alkaloid and a potential cancer therapy drug. Swainsonine production occurs via a multibranched pathway and is dispensable for fungal colonization of plants and infection of insect hosts. The first step of swainsonine biosynthesis is the production of the precursor pipecolic acid (PA) via conversion of L-lysine (Lys) to 1-piperideine-6-carboxylate (P6C) by the aminotransferase swnA, the latter being further reduced to PA by the reductase swnR. PA can be converted from lysine by both the SW biosynthetic cluster and the unclustered genes such as lysine cyclodeaminase. The PKS-NRPS hybrid synthetase swnK uptakes and condensates PA and malonyl-CoA with and without skipping of the ketoreductase (KR) domain in order to produce 3 intermediates, 1-oxoindolizidine, (1S)-1-hydroxyindolizin, and (1R)-1-hydroxyindolizine; with the transisomer (1S)-1-hydroxyindolizin being predominant. The terminal thioester reductase (TE) domain of swnK is involved in reduction of the thioester bond to release the intermediate aldehydes. The oxidoreductase swnN could contribute to the reduction of 1-oxoindolizidine to (1S)-1-hydroxyindolizin and (1R)-1-hydroxyindolizine, contributing to the major route of SW production. The dioxygenase swnH2 would be responsible for the oxidization of (1R)-1-hydroxyindolizine into (1R,2S)-1,2-dihydroxyindolizine and of (1S)-1-hydroxyindolizin to yield both (1R,2S)-1,2-dihydroxyindolizine and (1S,2S)-1,2-dihydroxyindolizine. The dioxygenase swnH1 then performs the conversion of the 1,2-dihydroxyindolizine epimers to SW. This is Oxidoreductase swnR from Metarhizium robertsii (strain ARSEF 23 / ATCC MYA-3075) (Metarhizium anisopliae (strain ARSEF 23)).